Here is a 139-residue protein sequence, read N- to C-terminus: Transcription antitermination protein NusB (139 aa).

This sequence belongs to the NusB family.

In terms of biological role, involved in transcription antitermination. Required for transcription of ribosomal RNA (rRNA) genes. Binds specifically to the boxA antiterminator sequence of the ribosomal RNA (rrn) operons. The protein is Transcription antitermination protein NusB of Nitratiruptor sp. (strain SB155-2).